The following is a 42-amino-acid chain: uncharacterized protein (42 aa).

The chain crosses the membrane as a helical span at residues 5-27; that stretch reads FLHTNITIIPHSVLYVSLSYYII.

The protein resides in the membrane. This is an uncharacterized protein from Saccharomyces cerevisiae (strain ATCC 204508 / S288c) (Baker's yeast).